The chain runs to 389 residues: Na(+)/H(+) antiporter NhaA 1 (389 aa).

The next 11 membrane-spanning stretches (helical) occupy residues Val12–Val32, Phe62–Leu82, Ile97–Leu117, Gly128–Gly148, Ile157–Phe177, Ile184–Gly204, Ile220–Ile240, Phe260–Ser280, Ile282–Gly302, Leu331–Leu351, and Leu365–Phe385.

Belongs to the NhaA Na(+)/H(+) (TC 2.A.33) antiporter family.

The protein localises to the cell inner membrane. The catalysed reaction is Na(+)(in) + 2 H(+)(out) = Na(+)(out) + 2 H(+)(in). Its function is as follows. Na(+)/H(+) antiporter that extrudes sodium in exchange for external protons. This is Na(+)/H(+) antiporter NhaA 1 from Campylobacter jejuni subsp. jejuni serotype O:6 (strain 81116 / NCTC 11828).